The chain runs to 157 residues: CAPA peptides (157 aa).

The N-terminal stretch at 1-21 is a signal peptide; the sequence is MQPTMRIIVSMALLAYAVASA. The propeptide occupies 22–28; the sequence is YHSNVKL. Val-42 carries the valine amide modification. Positions 45-66 are excised as a propeptide; sequence ASGNTWQLPLNDLYPEYEPAQV. At Gln-69 the chain carries Pyrrolidone carboxylic acid; partial. Valine amide is present on Val-76. Residues Leu-85 and Leu-117 each carry the leucine amide modification. Positions 120 to 157 are excised as a propeptide; it reads AFKNDDDEITIQNESNDHSEPEQTELIHEDRRKRQTLN. The interval 131 to 157 is disordered; that stretch reads QNESNDHSEPEQTELIHEDRRKRQTLN. Over residues 134-151 the composition is skewed to basic and acidic residues; the sequence is SNDHSEPEQTELIHEDRR.

It belongs to the pyrokinin family. In terms of tissue distribution, CAPA-periviscerokinin 1: Expressed in corpora cardiaca (CC), corpora allata (CA), antennal lobe (AL) and gnathal ganglion (GNG) (at protein level). Expression detected in most animals in CC and CA and in some animals in AL and GNG (at protein level). CAPA-periviscerokinin 2: Expressed in corpora cardiaca (CC), corpora allata (CA), antennal lobe (AL) and gnathal ganglion (GNG) (at protein level). For non-pyroglutamate form, expression in AL detected in all animals, in CC, CA and GNG in most animals (at protein level). For pyroglutamate form, expression in CC and CA detected in most animals, in AL and GNG in some animals (at protein level). CAPA-periviscerokinin 3: Expressed in corpora cardiaca (CC), corpora allata (CA), antennal lobe (AL) and gnathal ganglion (GNG). Expression detected in most animals in CC and CA and in some animals in AL and GNG (at protein level). CAPA-precursor-related peptide 3: Expressed in corpora cardiaca (CC), corpora allata (CA), antennal lobe (AL) and gnathal ganglion (GNG) (at protein level). Expression in CC and CA detected in some animals, expression in Al and GNG detected in few animals (at protein level). CAPA-trypto-pyrokinin: Expressed in corpora cardiaca (CC), corpora allata (CA), antennal lobe (AL) and gnathal ganglion (GNG) (at protein level). Expression in CC, CA and GNG detected in most animals, in AL in some animals (at protein level).

The protein localises to the secreted. In terms of biological role, myoactive. The chain is CAPA peptides from Agrotis ipsilon (Black cutworm moth).